Here is a 102-residue protein sequence, read N- to C-terminus: Aspartyl/glutamyl-tRNA(Asn/Gln) amidotransferase subunit C (102 aa).

This sequence belongs to the GatC family. In terms of assembly, heterotrimer of A, B and C subunits.

The catalysed reaction is L-glutamyl-tRNA(Gln) + L-glutamine + ATP + H2O = L-glutaminyl-tRNA(Gln) + L-glutamate + ADP + phosphate + H(+). It catalyses the reaction L-aspartyl-tRNA(Asn) + L-glutamine + ATP + H2O = L-asparaginyl-tRNA(Asn) + L-glutamate + ADP + phosphate + 2 H(+). Allows the formation of correctly charged Asn-tRNA(Asn) or Gln-tRNA(Gln) through the transamidation of misacylated Asp-tRNA(Asn) or Glu-tRNA(Gln) in organisms which lack either or both of asparaginyl-tRNA or glutaminyl-tRNA synthetases. The reaction takes place in the presence of glutamine and ATP through an activated phospho-Asp-tRNA(Asn) or phospho-Glu-tRNA(Gln). This is Aspartyl/glutamyl-tRNA(Asn/Gln) amidotransferase subunit C from Bordetella parapertussis (strain 12822 / ATCC BAA-587 / NCTC 13253).